The primary structure comprises 2531 residues: Highly reducing polyketide synthase gloL (2531 aa).

The Ketosynthase family 3 (KS3) domain occupies 15-435 (YEPLAIVGMG…GANAHVILDS (421 aa)). Active-site for beta-ketoacyl synthase activity residues include Cys187, His322, and His358. The tract at residues 449-525 (TNGLSVNGHS…GHSVNGHSKP (77 aa)) is disordered. Residues 453–503 (SVNGHSINGNSVNGHSVNGHSTNGHSINGNSVNGHSVNGNSVNGHSTNGHS) show a composition bias toward low complexity. Residues 505–521 (NGHSANGNSINGHSVNG) are compositionally biased toward polar residues. Positions 602–909 (MVFTGQGAQW…VTALERGKDC (308 aa)) are malonyl-CoA:ACP transacylase (MAT) domain. An N-terminal hotdog fold region spans residues 971 to 1099 (HEILGSRTVE…GQIRSGTDNP (129 aa)). Residues 971 to 1251 (HEILGSRTVE…GGQFSPIEED (281 aa)) form a dehydratase (DH) domain region. A PKS/mFAS DH domain is found at 971–1254 (HEILGSRTVE…FSPIEEDSSD (284 aa)). His1003 serves as the catalytic Proton acceptor; for dehydratase activity. Residues 1109-1254 (DHPRSVPSPY…FSPIEEDSSD (146 aa)) are C-terminal hotdog fold. The active-site Proton donor; for dehydratase activity is the Asp1169. The interval 1419–1597 (DFFTAAGHSK…FSGCDATVYD (179 aa)) is methyltransferase (CMet) domain. Positions 1806-2114 (GLLQTLRWVP…KGSHIGKIVV (309 aa)) are enoyl reductase (ER) (ER) domain. The segment at 2139–2312 (GYLLVGGLGG…ASVVDIGVMG (174 aa)) is ketoreductase (KR) domain. Residues 2413 to 2505 (MSSVETDSSI…ALGLLTIEGL (93 aa)) form the Carrier domain. The residue at position 2464 (Ser2464) is an O-(pantetheine 4'-phosphoryl)serine.

It participates in mycotoxin biosynthesis. Functionally, highly reducing polyketide synthase; part of the gene cluster that mediates the biosynthesis of pneumocandins, lipohexapeptides of the echinocandin family that prevent fungal cell wall formation by non-competitive inhibition of beta-1,3-glucan synthase. The 10,12-dimethylmyristoyl side chain is synthesized by the reducing polyketide synthase gloL/GLPKS4. The thioesterase gloN/GLHYD exclusively interacts with gloL/GLPKS4 to maintain turnover of the polyketide side chain. The 10R,12S-dimethylmyristic acid is then transferred to the first thiolation domain of the nonribosomal peptide synthetase gloA/GLNRPS4 by the acyl-AMP ligase gloD/GLligase, followed by its acylation to L-ornithine to trigger elongation of the cyclic hexapeptide. L-ornithine, 4R-hydroxyl-L-proline (generated from L-proline by the dioxygenase gloF/GLOXY2), 3S-hydroxyl-L-homotyrosine (generated by gloG/GLHtyB, gloH/GLHtyA, gloI/GLHtyC, gloJ/GLHtyD and hydroxylated at C-3 by the dioxygenase gloM/GLOXY1), 3R-hydroxyl-L-glutamine (generated from L-glutamine probably by the dioxygenase gloE/GLOXY3) and 3S-hydroxyl-L-proline (generated from L-proline by the dioxygenase gloF/GLOXY2 to yield pneumocandin B0), or 3S-hydroxyl-4S-methyl-L-proline (generated from L-leucine by the dioxygenase gloC/GLOXY4 to yield pneumocandin A0) are sequentially added to the growing chain. The last C domain of gloA/GLNRPS4 is proposed to be responsible for cyclization by condensation to form the peptide bond between L-ornithine and 3S-hydroxyl-4S-methyl-L-proline (for pneumocandin A0) or 3S-hydroxyl-L-proline (for pneumocandin B0). Finally, the subsequent C-4 hydroxylation of 3S-hydroxyl-L-homotyrosine and L-ornithine dihydroxylation at C-4 and C-5 are performed by the cytochrome P450 monooxygenases gloP/GLP450-1 and gloO/GLP450-2, respectively. This is Highly reducing polyketide synthase gloL from Glarea lozoyensis (strain ATCC 20868 / MF5171).